The primary structure comprises 137 residues: Small ribosomal subunit protein uS12 (137 aa).

A disordered region spans residues 1 to 55 (MPTINQLVRKPRKSKVEKSDSPALNKGYNSFKKTQTNVNSPQKRGVCTRVGTMTP). Over residues 27–42 (GYNSFKKTQTNVNSPQ) the composition is skewed to polar residues. Asp102 carries the 3-methylthioaspartic acid modification.

It belongs to the universal ribosomal protein uS12 family. Part of the 30S ribosomal subunit. Contacts proteins S8 and S17. May interact with IF1 in the 30S initiation complex.

With S4 and S5 plays an important role in translational accuracy. In terms of biological role, interacts with and stabilizes bases of the 16S rRNA that are involved in tRNA selection in the A site and with the mRNA backbone. Located at the interface of the 30S and 50S subunits, it traverses the body of the 30S subunit contacting proteins on the other side and probably holding the rRNA structure together. The combined cluster of proteins S8, S12 and S17 appears to hold together the shoulder and platform of the 30S subunit. The polypeptide is Small ribosomal subunit protein uS12 (Enterococcus faecalis (strain ATCC 700802 / V583)).